Consider the following 75-residue polypeptide: Translation initiation factor IF-1, chloroplastic (75 aa).

The region spanning methionine 1–serine 72 is the S1-like domain.

Belongs to the IF-1 family. In terms of assembly, component of the 30S ribosomal translation pre-initiation complex which assembles on the 30S ribosome in the order IF-2 and IF-3, IF-1 and N-formylmethionyl-tRNA(fMet); mRNA recruitment can occur at any time during PIC assembly.

The protein resides in the plastid. It localises to the chloroplast. Its function is as follows. One of the essential components for the initiation of protein synthesis. Stabilizes the binding of IF-2 and IF-3 on the 30S subunit to which N-formylmethionyl-tRNA(fMet) subsequently binds. Helps modulate mRNA selection, yielding the 30S pre-initiation complex (PIC). Upon addition of the 50S ribosomal subunit IF-1, IF-2 and IF-3 are released leaving the mature 70S translation initiation complex. The chain is Translation initiation factor IF-1, chloroplastic from Pinus koraiensis (Korean pine).